We begin with the raw amino-acid sequence, 311 residues long: Porphobilinogen deaminase (311 aa).

Cysteine 242 bears the S-(dipyrrolylmethanemethyl)cysteine mark.

It belongs to the HMBS family. In terms of assembly, monomer. Dipyrromethane serves as cofactor.

The catalysed reaction is 4 porphobilinogen + H2O = hydroxymethylbilane + 4 NH4(+). The protein operates within porphyrin-containing compound metabolism; protoporphyrin-IX biosynthesis; coproporphyrinogen-III from 5-aminolevulinate: step 2/4. Its function is as follows. Tetrapolymerization of the monopyrrole PBG into the hydroxymethylbilane pre-uroporphyrinogen in several discrete steps. The sequence is that of Porphobilinogen deaminase (hemC) from Neisseria meningitidis serogroup B (strain ATCC BAA-335 / MC58).